The sequence spans 201 residues: Dephospho-CoA kinase (201 aa).

In terms of domain architecture, DPCK spans 3–201; it reads WIGLTGGIAC…KWLEELKNQN (199 aa). Residue 11 to 16 participates in ATP binding; that stretch reads ACGKST.

Belongs to the CoaE family.

Its subcellular location is the cytoplasm. The catalysed reaction is 3'-dephospho-CoA + ATP = ADP + CoA + H(+). Its pathway is cofactor biosynthesis; coenzyme A biosynthesis; CoA from (R)-pantothenate: step 5/5. Catalyzes the phosphorylation of the 3'-hydroxyl group of dephosphocoenzyme A to form coenzyme A. The protein is Dephospho-CoA kinase of Bdellovibrio bacteriovorus (strain ATCC 15356 / DSM 50701 / NCIMB 9529 / HD100).